Reading from the N-terminus, the 119-residue chain is uncharacterized protein (119 aa).

This is an uncharacterized protein from Escherichia coli (strain K12).